Reading from the N-terminus, the 124-residue chain is Large ribosomal subunit protein uL18 (124 aa).

The protein belongs to the universal ribosomal protein uL18 family. Part of the 50S ribosomal subunit; part of the 5S rRNA/L5/L18/L25 subcomplex. Contacts the 5S and 23S rRNAs.

This is one of the proteins that bind and probably mediate the attachment of the 5S RNA into the large ribosomal subunit, where it forms part of the central protuberance. The chain is Large ribosomal subunit protein uL18 from Desulfosudis oleivorans (strain DSM 6200 / JCM 39069 / Hxd3) (Desulfococcus oleovorans).